The following is a 112-amino-acid chain: Putative regulatory protein DP2861 (112 aa).

It belongs to the RemA family.

In Desulfotalea psychrophila (strain LSv54 / DSM 12343), this protein is Putative regulatory protein DP2861.